Consider the following 319-residue polypeptide: ATP-dependent 6-phosphofructokinase (319 aa).

ATP is bound at residue glycine 11. 21-25 is an ADP binding site; sequence RAVVR. Residues 72–73 and 102–105 each bind ATP; these read RC and GEGS. Position 103 (glutamate 103) interacts with Mg(2+). Substrate is bound at residue 126–128; it reads TID. The active-site Proton acceptor is aspartate 128. Lysine 155 contacts ADP. Residues arginine 163 and 170–172 contribute to the substrate site; that span reads MGR. Residues 186 to 188, arginine 212, and 214 to 216 contribute to the ADP site; these read GAE and KIN. Residues glutamate 223, arginine 244, and 250 to 253 contribute to the substrate site; that span reads HVQR.

This sequence belongs to the phosphofructokinase type A (PFKA) family. ATP-dependent PFK group I subfamily. Prokaryotic clade 'B1' sub-subfamily. As to quaternary structure, homotetramer. Mg(2+) is required as a cofactor.

It is found in the cytoplasm. It carries out the reaction beta-D-fructose 6-phosphate + ATP = beta-D-fructose 1,6-bisphosphate + ADP + H(+). Its pathway is carbohydrate degradation; glycolysis; D-glyceraldehyde 3-phosphate and glycerone phosphate from D-glucose: step 3/4. Allosterically activated by ADP and other diphosphonucleosides, and allosterically inhibited by phosphoenolpyruvate. In terms of biological role, catalyzes the phosphorylation of D-fructose 6-phosphate to fructose 1,6-bisphosphate by ATP, the first committing step of glycolysis. This Thermotoga neapolitana (strain ATCC 49049 / DSM 4359 / NBRC 107923 / NS-E) protein is ATP-dependent 6-phosphofructokinase.